The chain runs to 514 residues: Threonine synthase (514 aa).

Lysine 124 is subject to N6-(pyridoxal phosphate)lysine. Residues glycine 277, asparagine 278, phenylalanine 279, aspartate 281, and threonine 449 each coordinate pyridoxal 5'-phosphate. At serine 467 the chain carries Phosphoserine.

Belongs to the threonine synthase family. Requires pyridoxal 5'-phosphate as cofactor.

The enzyme catalyses O-phospho-L-homoserine + H2O = L-threonine + phosphate. Its pathway is amino-acid biosynthesis; L-threonine biosynthesis; L-threonine from L-aspartate: step 5/5. Catalyzes the gamma-elimination of phosphate from L-phosphohomoserine and the beta-addition of water to produce L-threonine. The chain is Threonine synthase (THR4) from Saccharomyces cerevisiae (strain ATCC 204508 / S288c) (Baker's yeast).